The following is a 438-amino-acid chain: Prenyltransferase malE (438 aa).

A substrate-binding site is contributed by Glu-92. 7 residues coordinate dimethylallyl diphosphate: Arg-106, Lys-192, Tyr-194, Lys-259, Tyr-261, Tyr-346, and Tyr-411.

It belongs to the tryptophan dimethylallyltransferase family.

The enzyme catalyses (S)-3-(indol-3-ylmethyl)-6,7,8,8a-tetrahydropyrrolo[1,2-a]pyrazin-1-one + dimethylallyl diphosphate = (S)-3-{[2-(1,1-dimethylallyl)-indol-3-yl]methyl}-6,7,8,8a-tetrahydropyrrolo[1,2-a]pyrazin-1-one + diphosphate. It catalyses the reaction 1-hydroxy-3-(indol-3-ylmethyl)-6H,7H,8H-5lambda(5)-pyrrolo[1,2-a]pyrazine + dimethylallyl diphosphate = 1-hydroxy-3-{[2-(1,1-dimethylallyl)-indol-3-yl]methyl}-6H,7H,8H-5lambda(5)-pyrrolo[1,2-a]pyrazine + diphosphate. It participates in alkaloid biosynthesis. Prenyltransferase; part of the gene cluster that mediates the biosynthesis of malbrancheamide, a dichlorinated fungal indole alkaloid that belongs to a family of natural products containing a characteristic bicyclo[2.2.2]diazaoctane core. The first step of malbrancheamide biosynthesis involves coupling of L-proline and L-tryptophan by malG, a bimodular NRPS, to produce L-Pro-L-Trp aldehyde through reductive offloading. This compound undergoes spontaneous cyclization and dehydration to give a dienamine which is reverse prenylated at C-2 by malE. The other prenyltransferase present in the cluster, malB, displays modest activity, suggesting that may be a redundant gene in the pathway. Subsequently, a [4+2] Diels-Alder cyclo-addition catalyzed by the bifunctional enzyme malC forms the characteristic bicyclo[2.2.2]diazaoctane ring of premalbrancheamid. Finally, the flavin-dependent halogenase malA catalyzes the iterative dichlorination of the indole ring of premalbrancheamide to yield C-9 monochlorinated malbrancheamide B, C-8 monochlorinated isomalbrancheamide B, and dichlorinated malbrancheamide. MalA is also able to brominate premalbrancheamide at C-9 to yield malbrancheamide C, and, to a lesser extend, at C-8 to yield isomalbrancheamide C. Finally, malA can brominate C-9 monochlorinated malbrancheamide B at C-8 to yield malbrancheamide D, or C-8 monochlorinated isomalbrancheamide B at C-9 to produce isomalbrancheamide D. This is Prenyltransferase malE from Malbranchea aurantiaca.